The sequence spans 224 residues: MLRYLMVGSLLVLAGCASTEHKPIPDDPYYAPVVPEEPPVALEPTGSIFLDSQAASLYTDIRAHRVGDIITVVLTESTQATKSANNEIKKGSDLNMDAIQALGGPVTISGNPLSLGYSDSMNTKREADADQSNSLRGNISAHVLQVLANGNLVIRGEKWISINNGDEFIRVTGVIRPQDITTDNTVVSTRVANARIQYSGTGTFANSQQVGWLSQFFLSDWWPF.

Residues 1–15 form the signal peptide; it reads MLRYLMVGSLLVLAG. Cys-16 carries the N-palmitoyl cysteine lipid modification. Cys-16 carries the S-diacylglycerol cysteine lipid modification.

The protein belongs to the FlgH family. The basal body constitutes a major portion of the flagellar organelle and consists of four rings (L,P,S, and M) mounted on a central rod.

The protein localises to the cell outer membrane. It is found in the bacterial flagellum basal body. In terms of biological role, assembles around the rod to form the L-ring and probably protects the motor/basal body from shearing forces during rotation. This Shewanella amazonensis (strain ATCC BAA-1098 / SB2B) protein is Flagellar L-ring protein.